We begin with the raw amino-acid sequence, 91 residues long: Small ribosomal subunit protein uS15 (91 aa).

This sequence belongs to the universal ribosomal protein uS15 family. As to quaternary structure, part of the 30S ribosomal subunit. Forms a bridge to the 50S subunit in the 70S ribosome, contacting the 23S rRNA.

One of the primary rRNA binding proteins, it binds directly to 16S rRNA where it helps nucleate assembly of the platform of the 30S subunit by binding and bridging several RNA helices of the 16S rRNA. Its function is as follows. Forms an intersubunit bridge (bridge B4) with the 23S rRNA of the 50S subunit in the ribosome. The chain is Small ribosomal subunit protein uS15 from Legionella pneumophila (strain Paris).